Consider the following 159-residue polypeptide: Small ribosomal subunit protein uS4 (159 aa).

The S4 RNA-binding domain occupies 106–158 (RRLQTIVYRKGLAKSIYHARQLVVHGHVAVAGRRVTSPGFLVPRDLEDKITLI).

Belongs to the universal ribosomal protein uS4 family. As to quaternary structure, part of the 30S ribosomal subunit. Contacts protein S5. The interaction surface between S4 and S5 is involved in control of translational fidelity.

Functionally, one of the primary rRNA binding proteins, it binds directly to 16S rRNA where it nucleates assembly of the body of the 30S subunit. Its function is as follows. With S5 and S12 plays an important role in translational accuracy. The protein is Small ribosomal subunit protein uS4 of Pyrobaculum islandicum (strain DSM 4184 / JCM 9189 / GEO3).